A 317-amino-acid polypeptide reads, in one-letter code: Transaldolase (317 aa).

Lys-132 functions as the Schiff-base intermediate with substrate in the catalytic mechanism.

The protein belongs to the transaldolase family. Type 1 subfamily. In terms of assembly, homodimer.

It is found in the cytoplasm. It carries out the reaction D-sedoheptulose 7-phosphate + D-glyceraldehyde 3-phosphate = D-erythrose 4-phosphate + beta-D-fructose 6-phosphate. It participates in carbohydrate degradation; pentose phosphate pathway; D-glyceraldehyde 3-phosphate and beta-D-fructose 6-phosphate from D-ribose 5-phosphate and D-xylulose 5-phosphate (non-oxidative stage): step 2/3. In terms of biological role, transaldolase is important for the balance of metabolites in the pentose-phosphate pathway. This Mannheimia succiniciproducens (strain KCTC 0769BP / MBEL55E) protein is Transaldolase.